A 145-amino-acid chain; its full sequence is Superoxide dismutase [Mn/Fe] (145 aa).

Positions 10 and 64 each coordinate Fe(3+). Residues His10 and His64 each coordinate Mn(2+). The interval 126–145 (TSTANQDTPISEGKKPILGL) is disordered.

Belongs to the iron/manganese superoxide dismutase family. It depends on Mn(2+) as a cofactor. The cofactor is Fe(3+).

It carries out the reaction 2 superoxide + 2 H(+) = H2O2 + O2. Functionally, destroys superoxide anion radicals which are normally produced within the cells and which are toxic to biological systems. Catalyzes the dismutation of superoxide anion radicals into O2 and H2O2 by successive reduction and oxidation of the transition metal ion at the active site. The protein is Superoxide dismutase [Mn/Fe] (sodA) of Streptococcus mitis.